A 99-amino-acid chain; its full sequence is Malonate decarboxylase acyl carrier protein (99 aa).

Position 25 is an O-(phosphoribosyl dephospho-coenzyme A)serine (Ser-25).

Belongs to the MdcC family. In terms of processing, covalently binds the prosthetic group of malonate decarboxylase.

The protein resides in the cytoplasm. Functionally, subunit of malonate decarboxylase, it is an acyl carrier protein to which acetyl and malonyl thioester residues are bound via a 2'-(5''-phosphoribosyl)-3'-dephospho-CoA prosthetic group and turn over during the catalytic mechanism. The sequence is that of Malonate decarboxylase acyl carrier protein from Pseudomonas fluorescens (strain SBW25).